The chain runs to 257 residues: Thiazole synthase (257 aa).

Lys96 serves as the catalytic Schiff-base intermediate with DXP. 1-deoxy-D-xylulose 5-phosphate is bound by residues Gly157, 184 to 185 (AG), and 206 to 207 (NT).

Belongs to the ThiG family. In terms of assembly, homotetramer. Forms heterodimers with either ThiH or ThiS.

Its subcellular location is the cytoplasm. The catalysed reaction is [ThiS sulfur-carrier protein]-C-terminal-Gly-aminoethanethioate + 2-iminoacetate + 1-deoxy-D-xylulose 5-phosphate = [ThiS sulfur-carrier protein]-C-terminal Gly-Gly + 2-[(2R,5Z)-2-carboxy-4-methylthiazol-5(2H)-ylidene]ethyl phosphate + 2 H2O + H(+). The protein operates within cofactor biosynthesis; thiamine diphosphate biosynthesis. Functionally, catalyzes the rearrangement of 1-deoxy-D-xylulose 5-phosphate (DXP) to produce the thiazole phosphate moiety of thiamine. Sulfur is provided by the thiocarboxylate moiety of the carrier protein ThiS. In vitro, sulfur can be provided by H(2)S. This chain is Thiazole synthase, found in Rhizobium rhizogenes (strain K84 / ATCC BAA-868) (Agrobacterium radiobacter).